The chain runs to 147 residues: Deoxyuridine 5'-triphosphate nucleotidohydrolase (147 aa).

Substrate is bound by residues 63-65, N76, and 80-82; these read RSG and TID.

The protein belongs to the dUTPase family. Mg(2+) serves as cofactor.

It catalyses the reaction dUTP + H2O = dUMP + diphosphate + H(+). It functions in the pathway pyrimidine metabolism; dUMP biosynthesis; dUMP from dCTP (dUTP route): step 2/2. Its function is as follows. This enzyme is involved in nucleotide metabolism: it produces dUMP, the immediate precursor of thymidine nucleotides and it decreases the intracellular concentration of dUTP so that uracil cannot be incorporated into DNA. This is Deoxyuridine 5'-triphosphate nucleotidohydrolase from Chlamydia felis (strain Fe/C-56) (Chlamydophila felis).